An 84-amino-acid polypeptide reads, in one-letter code: Cell division topological specificity factor (84 aa).

The protein belongs to the MinE family.

Prevents the cell division inhibition by proteins MinC and MinD at internal division sites while permitting inhibition at polar sites. This ensures cell division at the proper site by restricting the formation of a division septum at the midpoint of the long axis of the cell. The sequence is that of Cell division topological specificity factor from Ralstonia nicotianae (strain ATCC BAA-1114 / GMI1000) (Ralstonia solanacearum).